A 1192-amino-acid polypeptide reads, in one-letter code: DNA topoisomerase 2 (1192 aa).

Residues Asn64, Asn95, and 142 to 149 (GTNGVGLK) each bind ATP. Residues Glu438, Asp539, and Asp541 each coordinate Mg(2+). Residues 707-1174 (IPNFLDGMTR…PGASVWLEEI (468 aa)) enclose the Topo IIA-type catalytic domain. Tyr800 acts as the O-(5'-phospho-DNA)-tyrosine intermediate in catalysis.

Belongs to the type II topoisomerase family. The cofactor is Mg(2+). Mn(2+) serves as cofactor. Ca(2+) is required as a cofactor.

Its subcellular location is the host cytoplasm. The catalysed reaction is ATP-dependent breakage, passage and rejoining of double-stranded DNA.. Its function is as follows. Type II topoisomerase. Processively relaxes supercoiled DNA. Displays DNA-supercoiling activity only when associated with the viral histone-like protein. This is DNA topoisomerase 2 from African swine fever virus (isolate Pig/Kenya/KEN-50/1950) (ASFV).